Reading from the N-terminus, the 276-residue chain is Formamidopyrimidine-DNA glycosylase (276 aa).

The active-site Schiff-base intermediate with DNA is proline 2. The active-site Proton donor is glutamate 3. Catalysis depends on lysine 60, which acts as the Proton donor; for beta-elimination activity. Residues histidine 93 and arginine 112 each contribute to the DNA site. An FPG-type zinc finger spans residues 240–274; sequence NVYGKKGEPCVTCGTILEKTVVGGRGTHYCPICQP. Arginine 264 acts as the Proton donor; for delta-elimination activity in catalysis.

It belongs to the FPG family. In terms of assembly, monomer. Requires Zn(2+) as cofactor.

The catalysed reaction is Hydrolysis of DNA containing ring-opened 7-methylguanine residues, releasing 2,6-diamino-4-hydroxy-5-(N-methyl)formamidopyrimidine.. It catalyses the reaction 2'-deoxyribonucleotide-(2'-deoxyribose 5'-phosphate)-2'-deoxyribonucleotide-DNA = a 3'-end 2'-deoxyribonucleotide-(2,3-dehydro-2,3-deoxyribose 5'-phosphate)-DNA + a 5'-end 5'-phospho-2'-deoxyribonucleoside-DNA + H(+). Functionally, involved in base excision repair of DNA damaged by oxidation or by mutagenic agents. Acts as a DNA glycosylase that recognizes and removes damaged bases. Has a preference for oxidized purines, such as 7,8-dihydro-8-oxoguanine (8-oxoG). Has AP (apurinic/apyrimidinic) lyase activity and introduces nicks in the DNA strand. Cleaves the DNA backbone by beta-delta elimination to generate a single-strand break at the site of the removed base with both 3'- and 5'-phosphates. This Bacillus cereus (strain ATCC 10987 / NRS 248) protein is Formamidopyrimidine-DNA glycosylase.